Here is a 273-residue protein sequence, read N- to C-terminus: Homeobox protein ceh-43 (273 aa).

Disordered regions lie at residues Asn-47 to Phe-79 and Arg-153 to Ser-204. The segment at residues Met-102–Lys-161 is a DNA-binding region (homeobox).

It belongs to the distal-less homeobox family. As to expression, predominantly expressed in the head hypdodermis, neuronal support cells and CAN neurons.

The protein localises to the nucleus. Functionally, probable transcription factor. Binds to the sequence motif 5'-ATAAT-3' in regulatory elements. Required for development of the anterior hypodermis during embryonic morphogenesis for cell adhesion; also affects embryonic and larval viability. Modulates and maintains dopaminergic neuron differentiation. May activate dopamine pathway genes in concert with ETS domain-containing protein ast-1, and homeobox proteins ceh-40 and ceh-20. This Caenorhabditis elegans protein is Homeobox protein ceh-43 (ceh-43).